A 159-amino-acid polypeptide reads, in one-letter code: Growth arrest and DNA damage-inducible protein GADD45 gamma (159 aa).

The interval Val43–Cys86 is homodimerization.

The protein belongs to the GADD45 family. In terms of assembly, undergoes concentration-dependent homodimerization, which is required for growth inhibititory activity and enhances interaction with PCNA. Interacts with GADD45GIP1. Interacts with PCNA.

Functionally, involved in the regulation of growth and apoptosis. Mediates activation of stress-responsive MTK1/MEKK4 MAPKKK. This Bos taurus (Bovine) protein is Growth arrest and DNA damage-inducible protein GADD45 gamma (GADD45G).